The chain runs to 1774 residues: Protein TIC 214 (1774 aa).

6 consecutive transmembrane segments (helical) span residues 19 to 39 (IINSVVVVGLYYGFLTTFSIG), 68 to 88 (FIAGQLMMFISIYYAPLHLAL), 91 to 111 (PHTITVLALPYLLFHFFWNNH), 133 to 153 (VFLNNLIFQLFNHFILPSSML), 176 to 196 (VGWLIGHILFMKWVGLVLVWI), and 227 to 247 (IFSILLFITCVYYLGRIPSPI). Over residues 254–268 (GTSETEERGGTKQDQ) the composition is skewed to basic and acidic residues. The segment at 254-275 (GTSETEERGGTKQDQEVSTEEA) is disordered.

Belongs to the TIC214 family. As to quaternary structure, part of the Tic complex.

Its subcellular location is the plastid. It is found in the chloroplast inner membrane. Its function is as follows. Involved in protein precursor import into chloroplasts. May be part of an intermediate translocation complex acting as a protein-conducting channel at the inner envelope. The protein is Protein TIC 214 of Aethionema cordifolium (Lebanon stonecress).